The sequence spans 530 residues: Putative ABC transporter ATP-binding protein SSO2030 (530 aa).

ABC transporter domains are found at residues 6–243 and 282–516; these read IRDL…LGLE and ALYA…EPPL. Residues 38–45 and 314–321 contribute to the ATP site; these read GRSGSGKS and GKNGSGKT.

It belongs to the ABC transporter superfamily.

The protein localises to the cell membrane. Functionally, probably part of an ABC transporter complex. Responsible for energy coupling to the transport system. The sequence is that of Putative ABC transporter ATP-binding protein SSO2030 from Saccharolobus solfataricus (strain ATCC 35092 / DSM 1617 / JCM 11322 / P2) (Sulfolobus solfataricus).